Consider the following 222-residue polypeptide: Superoxide dismutase [Mn], mitochondrial (222 aa).

Residues 1–24 (MLSRAVCGTGRQLAPALGYLGSRQ) constitute a mitochondrion transit peptide. Residue H50 coordinates Mn(2+). Y58 bears the 3'-nitrotyrosine mark. N6-acetyllysine; alternate occurs at positions 68 and 75. N6-succinyllysine; alternate occurs at positions 68 and 75. A Mn(2+)-binding site is contributed by H98. Position 114 is an N6-acetyllysine (K114). 2 positions are modified to N6-acetyllysine; alternate: K122 and K130. N6-succinyllysine; alternate occurs at positions 122 and 130. Residues D183 and H187 each contribute to the Mn(2+) site. K202 is modified (N6-acetyllysine).

It belongs to the iron/manganese superoxide dismutase family. As to quaternary structure, homotetramer. Mn(2+) serves as cofactor. Post-translationally, nitrated under oxidative stress. Nitration coupled with oxidation inhibits the catalytic activity. In terms of processing, acetylation at Lys-122 decreases enzymatic activity. Deacetylated by SIRT3 upon exposure to ionizing radiations or after long fasting. Polyubiquitinated; leading to proteasomal degradation. Deubiquitinated by USP36 which increases protein stability.

The protein localises to the mitochondrion matrix. It carries out the reaction 2 superoxide + 2 H(+) = H2O2 + O2. Functionally, destroys superoxide anion radicals which are normally produced within the cells and which are toxic to biological systems. In Macaca nemestrina (Pig-tailed macaque), this protein is Superoxide dismutase [Mn], mitochondrial (SOD2).